Here is a 514-residue protein sequence, read N- to C-terminus: 3-octaprenyl-4-hydroxybenzoate carboxy-lyase (514 aa).

Asparagine 177 serves as a coordination point for Mn(2+). Prenylated FMN is bound by residues 180–182 (IYR), 194–196 (RWL), and 199–200 (RG). Mn(2+) is bound at residue glutamate 243. The active-site Proton donor is aspartate 314.

This sequence belongs to the UbiD family. As to quaternary structure, homohexamer. Prenylated FMN is required as a cofactor. The cofactor is Mn(2+).

The protein resides in the cell membrane. It catalyses the reaction a 4-hydroxy-3-(all-trans-polyprenyl)benzoate + H(+) = a 2-(all-trans-polyprenyl)phenol + CO2. It functions in the pathway cofactor biosynthesis; ubiquinone biosynthesis. Catalyzes the decarboxylation of 3-octaprenyl-4-hydroxy benzoate to 2-octaprenylphenol, an intermediate step in ubiquinone biosynthesis. The protein is 3-octaprenyl-4-hydroxybenzoate carboxy-lyase of Bordetella parapertussis (strain 12822 / ATCC BAA-587 / NCTC 13253).